Here is a 101-residue protein sequence, read N- to C-terminus: Replication restart protein PriB (101 aa).

In terms of domain architecture, SSB spans 1–101 (MTTNSLVLSG…IHAENVELKT (101 aa)).

It belongs to the PriB family. As to quaternary structure, homodimer. Interacts with PriA and DnaT. Component of the replication restart primosome. Primosome assembly occurs via a 'hand-off' mechanism. PriA binds to replication forks, subsequently PriB then DnaT bind; DnaT then displaces ssDNA to generate the helicase loading substrate.

In terms of biological role, involved in the restart of stalled replication forks, which reloads the replicative helicase on sites other than the origin of replication; the PriA-PriB pathway is the major replication restart pathway. During primosome assembly it facilitates complex formation between PriA and DnaT on DNA; stabilizes PriA on DNA. Stimulates the DNA unwinding activity of PriA helicase. In Shewanella putrefaciens (strain CN-32 / ATCC BAA-453), this protein is Replication restart protein PriB.